Here is a 178-residue protein sequence, read N- to C-terminus: GTP-dependent dephospho-CoA kinase (178 aa).

Aspartate 55, valine 57, aspartate 74, lysine 76, and glutamate 127 together coordinate GTP.

It belongs to the GTP-dependent DPCK family.

The enzyme catalyses 3'-dephospho-CoA + GTP = GDP + CoA + H(+). It functions in the pathway cofactor biosynthesis; coenzyme A biosynthesis. Catalyzes the GTP-dependent phosphorylation of the 3'-hydroxyl group of dephosphocoenzyme A to form coenzyme A (CoA). The sequence is that of GTP-dependent dephospho-CoA kinase from Saccharolobus islandicus (strain Y.G.57.14 / Yellowstone #1) (Sulfolobus islandicus).